Here is a 640-residue protein sequence, read N- to C-terminus: 1-deoxy-D-xylulose-5-phosphate synthase (640 aa).

Residues histidine 79 and 120 to 122 (AHS) contribute to the thiamine diphosphate site. Aspartate 151 lines the Mg(2+) pocket. Residues 152–153 (GA), asparagine 180, tyrosine 289, and glutamate 371 each bind thiamine diphosphate. Mg(2+) is bound at residue asparagine 180.

Belongs to the transketolase family. DXPS subfamily. In terms of assembly, homodimer. It depends on Mg(2+) as a cofactor. Requires thiamine diphosphate as cofactor.

The enzyme catalyses D-glyceraldehyde 3-phosphate + pyruvate + H(+) = 1-deoxy-D-xylulose 5-phosphate + CO2. It functions in the pathway metabolic intermediate biosynthesis; 1-deoxy-D-xylulose 5-phosphate biosynthesis; 1-deoxy-D-xylulose 5-phosphate from D-glyceraldehyde 3-phosphate and pyruvate: step 1/1. Functionally, catalyzes the acyloin condensation reaction between C atoms 2 and 3 of pyruvate and glyceraldehyde 3-phosphate to yield 1-deoxy-D-xylulose-5-phosphate (DXP). The protein is 1-deoxy-D-xylulose-5-phosphate synthase of Erythrobacter litoralis (strain HTCC2594).